Consider the following 636-residue polypeptide: Polyadenylate-binding protein 1 (636 aa).

At M1 the chain carries N-acetylmethionine. 4 consecutive RRM domains span residues 11-89 (ASLY…WSQR), 99-175 (GNIF…RFKS), 191-268 (TNVY…RAQK), and 294-370 (VNLY…LAQR). A UNR-binding region spans residues 166–289 (RKVFVGRFKS…FEQMKQDRIT (124 aa)). Residue K299 is modified to N6-methyllysine. Residue S315 is modified to Phosphoserine. Residue T319 is modified to Phosphothreonine. An omega-N-methylarginine mark is found at R385, R419, R432, and R436. 2 positions are modified to omega-N-methylated arginine; by CARM1: R455 and R460. Omega-N-methylarginine occurs at positions 475 and 481. Asymmetric dimethylarginine; alternate is present on R493. Position 493 is a dimethylated arginine; alternate (R493). At R493 the chain carries Omega-N-methylarginine; alternate. R506 bears the Omega-N-methylarginine mark. K512 carries the post-translational modification N6-acetyllysine. Residue R518 is modified to Omega-N-methylarginine. The region spanning 542-619 (QEPLTASMLA…AVAVLQAHQA (78 aa)) is the PABC domain.

Belongs to the polyadenylate-binding protein type-1 family. May form homodimers. Component of a multisubunit autoregulatory ribonucleoprotein complex (ARC), at least composed of IGF2BP1, PABPC1 and CSDE1. Directly interacts with IGF2BP1. Part of a complex associated with the FOS mCRD domain and consisting of HNRPD, SYNCRIP, PAIP1 and CSDE1/UNR. Interacts with PAIP1 and PAIP2 (via the PABPC1-interacting motifs PAM1 and PAM2). Interacts with PAIP1 with a 1:1 stoichiometry and with PAIP2 with a 1:2 stoichiometry. The interaction with CSDE1 is direct and RNA-independent. Found in a mRNP complex with YBX2. Interacts with TENT2/GLD2. Identified in the spliceosome C complex. Identified in a mRNP complex, at least composed of DHX9, DDX3X, ELAVL1, HNRNPU, IGF2BP1, ILF3, PABPC1, PCBP2, PTBP2, STAU1, STAU2, SYNCRIP and YBX1. The interaction with DDX3X is direct and RNA-independent. This interaction increases in stressed cells and decreases during cell recovery. Identified in a IGF2BP1-dependent mRNP granule complex containing untranslated mRNAs. Interacts with NXF1/TAP. Interacts with PIWIL1. Interacts with AGO1, AGO2, GSPT1 and GSPT2. Interacts with LARP4B. Interacts (via the second and third RRM domains and the C-terminus) with PAIP2B (via central acidic portion and C-terminus). Forms a complex with LARP1 and SHFL. Interacts with LARP4. Interacts with ZFC3H1 in a RNase-sensitive manner. Interacts with TRIM71 (via NHL repeats) in an RNA-dependent manner. Interacts with TENT5C; the interaction has no effect on TENT5C poly(A) polymerase function. Interacts with G3BP1 and G3BP2. Interacts with ENDOV; the interaction is RNA-dependent and stimulates ENDOV activity. Interacts with UPF1; the interaction is RNA-dependent. Interacts with IGF2BP2 and IGF2BP3. May interact with SETX. Interacts with RBM46. Interacts with PAN3 isoform 1/Pan3L and isoform 3/Pan3S (via N-terminus); interaction with isoform 1 is less efficient than with isoform 3. Phosphorylated by MAPKAPK2. Post-translationally, methylated by CARM1. Arg-493 is dimethylated, probably to asymmetric dimethylarginine.

Its subcellular location is the cytoplasm. The protein resides in the stress granule. It localises to the nucleus. The protein localises to the cell projection. It is found in the lamellipodium. Its function is as follows. Binds the poly(A) tail of mRNA, including that of its own transcript, and regulates processes of mRNA metabolism such as pre-mRNA splicing and mRNA stability. Its function in translational initiation regulation can either be enhanced by PAIP1 or repressed by PAIP2. Can probably bind to cytoplasmic RNA sequences other than poly(A) in vivo. Binds to N6-methyladenosine (m6A)-containing mRNAs and contributes to MYC stability by binding to m6A-containing MYC mRNAs. Involved in translationally coupled mRNA turnover. Implicated with other RNA-binding proteins in the cytoplasmic deadenylation/translational and decay interplay of the FOS mRNA mediated by the major coding-region determinant of instability (mCRD) domain. Involved in regulation of nonsense-mediated decay (NMD) of mRNAs containing premature stop codons; for the recognition of premature termination codons (PTC) and initiation of NMD a competitive interaction between UPF1 and PABPC1 with the ribosome-bound release factors is proposed. By binding to long poly(A) tails, may protect them from uridylation by ZCCHC6/ZCCHC11 and hence contribute to mRNA stability. This Rattus norvegicus (Rat) protein is Polyadenylate-binding protein 1 (Pabpc1).